The chain runs to 404 residues: Probable tRNA sulfurtransferase (404 aa).

The THUMP domain maps to 60–165; the sequence is QPVVEALKLV…DEAAYISYEE (106 aa). ATP contacts are provided by residues 183–184, 208–209, R265, G287, and Q296; these read ML and HF.

Belongs to the ThiI family.

It is found in the cytoplasm. The enzyme catalyses [ThiI sulfur-carrier protein]-S-sulfanyl-L-cysteine + a uridine in tRNA + 2 reduced [2Fe-2S]-[ferredoxin] + ATP + H(+) = [ThiI sulfur-carrier protein]-L-cysteine + a 4-thiouridine in tRNA + 2 oxidized [2Fe-2S]-[ferredoxin] + AMP + diphosphate. The catalysed reaction is [ThiS sulfur-carrier protein]-C-terminal Gly-Gly-AMP + S-sulfanyl-L-cysteinyl-[cysteine desulfurase] + AH2 = [ThiS sulfur-carrier protein]-C-terminal-Gly-aminoethanethioate + L-cysteinyl-[cysteine desulfurase] + A + AMP + 2 H(+). The protein operates within cofactor biosynthesis; thiamine diphosphate biosynthesis. Its function is as follows. Catalyzes the ATP-dependent transfer of a sulfur to tRNA to produce 4-thiouridine in position 8 of tRNAs, which functions as a near-UV photosensor. Also catalyzes the transfer of sulfur to the sulfur carrier protein ThiS, forming ThiS-thiocarboxylate. This is a step in the synthesis of thiazole, in the thiamine biosynthesis pathway. The sulfur is donated as persulfide by IscS. This Streptococcus pyogenes serotype M5 (strain Manfredo) protein is Probable tRNA sulfurtransferase.